The primary structure comprises 215 residues: uncharacterized protein (215 aa).

It belongs to the mimivirus L31/R44 family.

This is an uncharacterized protein from Acanthamoeba polyphaga (Amoeba).